A 661-amino-acid polypeptide reads, in one-letter code: Heme transporter BhuA (661 aa).

An N-terminal signal peptide occupies residues 1–23 (MKFTRTLVLASTFLLATVATSQA). Positions 48 to 159 (KDNIEATGGT…AAGAIRYETV (112 aa)) constitute a TBDR plug domain. Residues 170–661 (TFGARIIGSY…TFTFQTAFKF (492 aa)) form the TBDR beta-barrel domain.

Belongs to the TonB-dependent receptor family.

It is found in the cell outer membrane. Heme transporter. This is Heme transporter BhuA (bhuA) from Brucella suis biovar 1 (strain 1330).